The primary structure comprises 448 residues: Methionine aminopeptidase 2-1 (448 aa).

Residues 1–83 (MAAQVIPELQ…TQKAQTEPPR (83 aa)) form a disordered region. The segment covering 32 to 48 (ENEDGDSEDDNGDDQGA) has biased composition (acidic residues). Basic residues predominate over residues 59 to 73 (AKKKKKKKPKKKKKD). Substrate is bound at residue His198. Residues Asp218, Asp229, and His298 each contribute to the a divalent metal cation site. His306 is a substrate binding site. Positions 334 and 429 each coordinate a divalent metal cation.

It belongs to the peptidase M24A family. Methionine aminopeptidase eukaryotic type 2 subfamily. Co(2+) serves as cofactor. It depends on Zn(2+) as a cofactor. The cofactor is Mn(2+). Requires Fe(2+) as cofactor.

The protein resides in the cytoplasm. It catalyses the reaction Release of N-terminal amino acids, preferentially methionine, from peptides and arylamides.. Its function is as follows. Cotranslationally removes the N-terminal methionine from nascent proteins. The N-terminal methionine is often cleaved when the second residue in the primary sequence is small and uncharged (Met-Ala-, Cys, Gly, Pro, Ser, Thr, or Val). This chain is Methionine aminopeptidase 2-1, found in Ajellomyces capsulatus (strain G186AR / H82 / ATCC MYA-2454 / RMSCC 2432) (Darling's disease fungus).